The primary structure comprises 255 residues: 5'-nucleotidase SurE (255 aa).

A divalent metal cation is bound by residues D8, D9, S40, and N93.

It belongs to the SurE nucleotidase family. It depends on a divalent metal cation as a cofactor.

It localises to the cytoplasm. The enzyme catalyses a ribonucleoside 5'-phosphate + H2O = a ribonucleoside + phosphate. Nucleotidase that shows phosphatase activity on nucleoside 5'-monophosphates. This is 5'-nucleotidase SurE from Rhodopseudomonas palustris (strain BisA53).